The sequence spans 705 residues: Probable E3 ubiquitin-protein ligase MID2 (705 aa).

The RING-type zinc finger occupies 30-80; it reads CPICLELFEDPLLLPCAHSLCFSCAHRILVSSCSSGESIEPITAFQCPTCR. A B box-type 1; degenerate zinc finger spans residues 137–184; the sequence is IACQFCEQDPPRDAVKTCITCEVSYCDRCLRATHPNKKPFTSHRLVEP. The B box-type 2 zinc-finger motif lies at 190-232; that stretch reads LRGITCLDHENEKVNMYCVSDDQLICALCKLVGRHRDHQVASL. 4 residues coordinate Zn(2+): cysteine 195, histidine 198, cysteine 218, and histidine 224. The stretch at 233–301 forms a coiled coil; sequence NDRFEKLKQT…IIQQRKQMIA (69 aa). Residues 340-399 form the COS domain; the sequence is LKENDQARFLQSAKNIAERVAMATASSQVLIPDINFNDAFENFALDFSREKKLLEGLDYL. The Fibronectin type-III domain occupies 404–504; sequence PPSIREELCT…EPTRLKTNSQ (101 aa). Residues 486–679 enclose the B30.2/SPRY domain; that stretch reads INQAGSRNSE…ILSGLPAPDF (194 aa).

Belongs to the TRIM/RBCC family. Homodimer or heterodimer with MID1. Interacts with IGBP1. Phosphorylated on serine and threonine residues. In terms of tissue distribution, low abundance in brain and lung, with even lower levels in heart, liver, and kidney.

It localises to the cytoplasm. It is found in the cytoskeleton. It carries out the reaction S-ubiquitinyl-[E2 ubiquitin-conjugating enzyme]-L-cysteine + [acceptor protein]-L-lysine = [E2 ubiquitin-conjugating enzyme]-L-cysteine + N(6)-ubiquitinyl-[acceptor protein]-L-lysine.. It functions in the pathway protein modification; protein ubiquitination. E3 ubiquitin ligase that plays a role in microtubule stabilization. Mediates the 'Lys-48'-linked polyubiquitination of LRRK2 to drive its localization to microtubules and its proteasomal degradation in neurons. This ubiquitination inhibits LRRK2 kinase activation by RAB29. In Mus musculus (Mouse), this protein is Probable E3 ubiquitin-protein ligase MID2 (Mid2).